The chain runs to 265 residues: MRVGVFDSGLGGLTVVQALSRVIKGADIFYVADTKHAPYGEKTPEQILQYSLNITAYFLDEHQIDVLIIACNTATSAAVKTLRERYPELIIIGTEPGIKPALEQTRTKNIGVLATPATLVGEKYQDLVNVLSAKEEVTLYEQACPGLVEQIENGEIESGKTHDMLEGWLHPMRENDVDTIVLGCTHYPLVAHKIEEIMKREMNLIHTGDAIAKRLLALAEEKGYENRGKFSLCIMSTAKIDQEIIKQIIPEYDCFKFISVKTSNF.

Residues 7–8 (DS) and 39–40 (YG) contribute to the substrate site. The active-site Proton donor/acceptor is the Cys71. 72–73 (NT) lines the substrate pocket. The Proton donor/acceptor role is filled by Cys184. Position 185–186 (185–186 (TH)) interacts with substrate.

The protein belongs to the aspartate/glutamate racemases family.

It catalyses the reaction L-glutamate = D-glutamate. The protein operates within cell wall biogenesis; peptidoglycan biosynthesis. Its function is as follows. Provides the (R)-glutamate required for cell wall biosynthesis. The polypeptide is Glutamate racemase (Sulfurovum sp. (strain NBC37-1)).